We begin with the raw amino-acid sequence, 237 residues long: Demethylmenaquinone methyltransferase (237 aa).

Residues Thr-58, Asp-79, and 107-108 (NA) contribute to the S-adenosyl-L-methionine site.

It belongs to the class I-like SAM-binding methyltransferase superfamily. MenG/UbiE family.

It catalyses the reaction a 2-demethylmenaquinol + S-adenosyl-L-methionine = a menaquinol + S-adenosyl-L-homocysteine + H(+). It participates in quinol/quinone metabolism; menaquinone biosynthesis; menaquinol from 1,4-dihydroxy-2-naphthoate: step 2/2. Its function is as follows. Methyltransferase required for the conversion of demethylmenaquinol (DMKH2) to menaquinol (MKH2). This chain is Demethylmenaquinone methyltransferase, found in Lactiplantibacillus plantarum (strain ATCC BAA-793 / NCIMB 8826 / WCFS1) (Lactobacillus plantarum).